A 252-amino-acid polypeptide reads, in one-letter code: NAC domain-containing protein 23 (252 aa).

The 166-residue stretch at 12 to 177 folds into the NAC domain; the sequence is MPPGFRFQPT…EMVLCRISNK (166 aa). Residues 110–183 mediate DNA binding; that stretch reads TAVKRRFVFY…ISNKDLPKPP (74 aa). The segment at 225–252 is disordered; the sequence is VDDAAAGTDDPGDLDEEIDDSMQRNHGG. The segment covering 234-244 has biased composition (acidic residues); it reads DPGDLDEEIDD.

Forms heterodimers with NAC26. Expressed in stems and panicles. Expressed in developing endosperm.

It is found in the nucleus. The protein localises to the cytoplasm. Its function is as follows. Transcription factor involved in the regulation of seed size. Binds to DNA-specific sequences of CLPD1 and OAT promoters in vitro. The chain is NAC domain-containing protein 23 from Oryza sativa subsp. japonica (Rice).